The chain runs to 243 residues: Orotidine 5'-phosphate decarboxylase (243 aa).

Substrate-binding positions include Asp-12, Lys-34, 61 to 70, Thr-125, Arg-187, Gln-196, Gly-216, and Arg-217; that span reads DLKFHDIPNT. Catalysis depends on Lys-63, which acts as the Proton donor.

It belongs to the OMP decarboxylase family. Type 1 subfamily. As to quaternary structure, homodimer.

It carries out the reaction orotidine 5'-phosphate + H(+) = UMP + CO2. It functions in the pathway pyrimidine metabolism; UMP biosynthesis via de novo pathway; UMP from orotate: step 2/2. Catalyzes the decarboxylation of orotidine 5'-monophosphate (OMP) to uridine 5'-monophosphate (UMP). This is Orotidine 5'-phosphate decarboxylase from Heliobacterium modesticaldum (strain ATCC 51547 / Ice1).